Consider the following 280-residue polypeptide: 2-dehydro-3-deoxyphosphooctonate aldolase (280 aa).

It belongs to the KdsA family.

The protein resides in the cytoplasm. It catalyses the reaction D-arabinose 5-phosphate + phosphoenolpyruvate + H2O = 3-deoxy-alpha-D-manno-2-octulosonate-8-phosphate + phosphate. It functions in the pathway carbohydrate biosynthesis; 3-deoxy-D-manno-octulosonate biosynthesis; 3-deoxy-D-manno-octulosonate from D-ribulose 5-phosphate: step 2/3. Its pathway is bacterial outer membrane biogenesis; lipopolysaccharide biosynthesis. The sequence is that of 2-dehydro-3-deoxyphosphooctonate aldolase from Colwellia psychrerythraea (strain 34H / ATCC BAA-681) (Vibrio psychroerythus).